The following is a 923-amino-acid chain: RNA polymerase-associated protein RapA (923 aa).

The region spanning glutamate 162 to glutamate 332 is the Helicase ATP-binding domain. Aspartate 175–threonine 182 is an ATP binding site. A DEAH box motif is present at residues aspartate 278–histidine 281. Residues lysine 443–serine 597 enclose the Helicase C-terminal domain.

This sequence belongs to the SNF2/RAD54 helicase family. RapA subfamily. As to quaternary structure, interacts with the RNAP. Has a higher affinity for the core RNAP than for the holoenzyme. Its ATPase activity is stimulated by binding to RNAP.

Functionally, transcription regulator that activates transcription by stimulating RNA polymerase (RNAP) recycling in case of stress conditions such as supercoiled DNA or high salt concentrations. Probably acts by releasing the RNAP, when it is trapped or immobilized on tightly supercoiled DNA. Does not activate transcription on linear DNA. Probably not involved in DNA repair. In Haemophilus influenzae (strain PittEE), this protein is RNA polymerase-associated protein RapA.